The chain runs to 273 residues: Bifunctional protein FolD (273 aa).

NADP(+)-binding positions include G149–G151 and V215.

Belongs to the tetrahydrofolate dehydrogenase/cyclohydrolase family. In terms of assembly, homodimer.

It catalyses the reaction (6R)-5,10-methylene-5,6,7,8-tetrahydrofolate + NADP(+) = (6R)-5,10-methenyltetrahydrofolate + NADPH. It carries out the reaction (6R)-5,10-methenyltetrahydrofolate + H2O = (6R)-10-formyltetrahydrofolate + H(+). Its pathway is one-carbon metabolism; tetrahydrofolate interconversion. In terms of biological role, catalyzes the oxidation of 5,10-methylenetetrahydrofolate to 5,10-methenyltetrahydrofolate and then the hydrolysis of 5,10-methenyltetrahydrofolate to 10-formyltetrahydrofolate. In Mycoplasma genitalium (strain ATCC 33530 / DSM 19775 / NCTC 10195 / G37) (Mycoplasmoides genitalium), this protein is Bifunctional protein FolD.